Consider the following 274-residue polypeptide: Large ribosomal subunit protein uL2cz/uL2cy (274 aa).

2 disordered regions span residues 1-21 (MAIH…VDSQ) and 225-274 (PVDH…RRSK).

The protein belongs to the universal ribosomal protein uL2 family. In terms of assembly, part of the 50S ribosomal subunit.

It is found in the plastid. It localises to the chloroplast. The chain is Large ribosomal subunit protein uL2cz/uL2cy (rpl2-A) from Gossypium barbadense (Sea Island cotton).